A 295-amino-acid chain; its full sequence is Elongation factor Ts (295 aa).

Positions 79–82 (TDFV) are involved in Mg(2+) ion dislocation from EF-Tu.

This sequence belongs to the EF-Ts family.

It is found in the cytoplasm. Functionally, associates with the EF-Tu.GDP complex and induces the exchange of GDP to GTP. It remains bound to the aminoacyl-tRNA.EF-Tu.GTP complex up to the GTP hydrolysis stage on the ribosome. The chain is Elongation factor Ts from Mycoplasma mycoides subsp. mycoides SC (strain CCUG 32753 / NCTC 10114 / PG1).